The chain runs to 425 residues: C2H2 type master regulator of conidiophore development brlA (425 aa).

3 disordered regions span residues 28–72 (MASS…RHTG), 232–257 (KTHSPTTPVRSCSLGTTSGTDTPMSR), and 281–301 (VQRQPSRKVARKQSSKQSLSL). The span at 30–44 (SSFSPMESPTPTPTS) shows a compositional bias: low complexity. A compositionally biased stretch (polar residues) spans 232–256 (KTHSPTTPVRSCSLGTTSGTDTPMS). Over residues 285 to 294 (PSRKVARKQS) the composition is skewed to basic residues. C2H2-type zinc fingers lie at residues 321–345 (KGRFKRQEHLKRHMKSHSKEKPHVC) and 351–376 (ERAFSRSDNLNAHYTKTHSKRGGRNR). The segment covering 365 to 374 (TKTHSKRGGR) has biased composition (basic residues). A disordered region spans residues 365–425 (TKTHSKRGGR…RETSEEAWLE (61 aa)).

It is found in the nucleus. Its function is as follows. BrlA, abaA and wetA are pivotal regulators of conidiophore development and conidium maturation. They act individually and together to regulate their own expression and that of numerous other sporulation-specific genes. Binds promoters of target genes at brlA response elements (BREs) containing the conserved sequence 5'-(C/A)(A/G)AGGG(G/A)-3'. Also coordinates the expression of carbohydrate-active enzymes and of the key effectors of cell wall remodeling during autolysis. This Aspergillus niger (strain ATCC MYA-4892 / CBS 513.88 / FGSC A1513) protein is C2H2 type master regulator of conidiophore development brlA.